The following is a 124-amino-acid chain: Holo-[acyl-carrier-protein] synthase (124 aa).

Mg(2+) contacts are provided by Asp-8 and Glu-56.

The protein belongs to the P-Pant transferase superfamily. AcpS family. Requires Mg(2+) as cofactor.

It localises to the cytoplasm. The enzyme catalyses apo-[ACP] + CoA = holo-[ACP] + adenosine 3',5'-bisphosphate + H(+). Its function is as follows. Transfers the 4'-phosphopantetheine moiety from coenzyme A to a Ser of acyl-carrier-protein. The protein is Holo-[acyl-carrier-protein] synthase of Nitratidesulfovibrio vulgaris (strain ATCC 29579 / DSM 644 / CCUG 34227 / NCIMB 8303 / VKM B-1760 / Hildenborough) (Desulfovibrio vulgaris).